The primary structure comprises 158 residues: 6,7-dimethyl-8-ribityllumazine synthase (158 aa).

5-amino-6-(D-ribitylamino)uracil-binding positions include phenylalanine 23, 61-63 (SFE), and 85-87 (AVI). 90–91 (ET) lines the (2S)-2-hydroxy-3-oxobutyl phosphate pocket. The active-site Proton donor is the histidine 93. Phenylalanine 118 lines the 5-amino-6-(D-ribitylamino)uracil pocket. Residue arginine 132 coordinates (2S)-2-hydroxy-3-oxobutyl phosphate.

This sequence belongs to the DMRL synthase family.

It carries out the reaction (2S)-2-hydroxy-3-oxobutyl phosphate + 5-amino-6-(D-ribitylamino)uracil = 6,7-dimethyl-8-(1-D-ribityl)lumazine + phosphate + 2 H2O + H(+). The protein operates within cofactor biosynthesis; riboflavin biosynthesis; riboflavin from 2-hydroxy-3-oxobutyl phosphate and 5-amino-6-(D-ribitylamino)uracil: step 1/2. In terms of biological role, catalyzes the formation of 6,7-dimethyl-8-ribityllumazine by condensation of 5-amino-6-(D-ribitylamino)uracil with 3,4-dihydroxy-2-butanone 4-phosphate. This is the penultimate step in the biosynthesis of riboflavin. In Prochlorococcus marinus subsp. pastoris (strain CCMP1986 / NIES-2087 / MED4), this protein is 6,7-dimethyl-8-ribityllumazine synthase.